The following is a 74-amino-acid chain: Defensin-like protein 39 (74 aa).

A signal peptide spans 1 to 28; that stretch reads MEKKSLAALSFLLLLVLFVAQEIVVTEA. Cystine bridges form between Cys-31-Cys-74, Cys-42-Cys-63, Cys-48-Cys-68, and Cys-52-Cys-70.

The protein belongs to the DEFL family. In terms of tissue distribution, pods.

The protein localises to the secreted. Possesses antifungal activity. The protein is Defensin-like protein 39 (PI39) of Pisum sativum (Garden pea).